Consider the following 38-residue polypeptide: Photosystem II reaction center protein L (38 aa).

Residues Ser17–Phe37 traverse the membrane as a helical segment.

Belongs to the PsbL family. PSII is composed of 1 copy each of membrane proteins PsbA, PsbB, PsbC, PsbD, PsbE, PsbF, PsbH, PsbI, PsbJ, PsbK, PsbL, PsbM, PsbT, PsbX, PsbY, PsbZ, Psb30/Ycf12, at least 3 peripheral proteins of the oxygen-evolving complex and a large number of cofactors. It forms dimeric complexes.

It is found in the plastid. It localises to the chloroplast thylakoid membrane. Its function is as follows. One of the components of the core complex of photosystem II (PSII). PSII is a light-driven water:plastoquinone oxidoreductase that uses light energy to abstract electrons from H(2)O, generating O(2) and a proton gradient subsequently used for ATP formation. It consists of a core antenna complex that captures photons, and an electron transfer chain that converts photonic excitation into a charge separation. This subunit is found at the monomer-monomer interface and is required for correct PSII assembly and/or dimerization. This Chlorokybus atmophyticus (Soil alga) protein is Photosystem II reaction center protein L.